Here is a 368-residue protein sequence, read N- to C-terminus: Acetyl-coenzyme A carboxylase carboxyl transferase subunit alpha (368 aa).

The CoA carboxyltransferase C-terminal domain maps to 44–294 (EIDNKLQEIY…RKSIEKNLNE (251 aa)).

The protein belongs to the AccA family. Acetyl-CoA carboxylase is a heterohexamer composed of biotin carboxyl carrier protein (AccB), biotin carboxylase (AccC) and two subunits each of ACCase subunit alpha (AccA) and ACCase subunit beta (AccD).

The protein localises to the cytoplasm. The catalysed reaction is N(6)-carboxybiotinyl-L-lysyl-[protein] + acetyl-CoA = N(6)-biotinyl-L-lysyl-[protein] + malonyl-CoA. It functions in the pathway lipid metabolism; malonyl-CoA biosynthesis; malonyl-CoA from acetyl-CoA: step 1/1. Component of the acetyl coenzyme A carboxylase (ACC) complex. First, biotin carboxylase catalyzes the carboxylation of biotin on its carrier protein (BCCP) and then the CO(2) group is transferred by the carboxyltransferase to acetyl-CoA to form malonyl-CoA. This chain is Acetyl-coenzyme A carboxylase carboxyl transferase subunit alpha, found in Pelagibacter ubique (strain HTCC1062).